A 1207-amino-acid polypeptide reads, in one-letter code: DNA-directed RNA polymerase, mitochondrial (1207 aa).

The transit peptide at 1–41 (MSALRWTRSAAGLGRVLRSPGPHRPPSEEGTFGGFCSSRRS) directs the protein to the mitochondrion. 2 disordered regions span residues 1 to 48 (MSAL…SPRE) and 82 to 103 (KKVQVDRPPQGHSSRWAQKLEA). 2 PPR repeats span residues 232-266 (TLHMYNTVMLGWARKGSFRELVYVFLMLKDAGLSP) and 267-302 (DLCSYAAALQCMGRRDQDVRTIQRCLKQMMEEGFQP). The interval 702–724 (VPPPRSEAPRPARYQLPPGSTPV) is disordered. The tract at residues 773–1207 (FRGRTYPCPP…QVIRSTYFFS (435 aa)) is mediates interaction with TEFM. Residues Asp-893, Lys-962, and Asp-1121 contribute to the active site.

The protein belongs to the phage and mitochondrial RNA polymerase family. Homodimer. Component of the mitochondrial transcription initiation complex, composed at least of TFB2M, TFAM and POLRMT. In this complex TFAM recruits POLRMT to the promoter whereas TFB2M induces structural changes in POLRMT to enable promoter opening and trapping of the DNA non-template strand. Upon metabolic stress, forms a complex composed of FOXO3, SIRT3 and mitochondrial RNA polymerase POLRMT; the complex is recruited to mtDNA in a SIRT3-dependent manner. Also forms a complex composed of FOXO3, SIRT3, TFAM and POLRMT. Interacts with TFB1M and TFB2M, leading to the stimulation of transcription. Interacts with TEFM. Interacts with MTRES1.

Its subcellular location is the mitochondrion. It carries out the reaction RNA(n) + a ribonucleoside 5'-triphosphate = RNA(n+1) + diphosphate. In terms of biological role, DNA-dependent RNA polymerase catalyzes the transcription of mitochondrial DNA into RNA using the four ribonucleoside triphosphates as substrates. Component of the mitochondrial transcription initiation complex, composed at least of TFB2M, TFAM and POLRMT that is required for basal transcription of mitochondrial DNA. In this complex, TFAM recruits POLRMT to a specific promoter whereas TFB2M induces structural changes in POLRMT to enable promoter opening and trapping of the DNA non-template strand. Has DNA primase activity. Catalyzes the synthesis of short RNA primers that are necessary for the initiation of lagging-strand DNA synthesis from the origin of light-strand DNA replication (OriL). In Mus musculus (Mouse), this protein is DNA-directed RNA polymerase, mitochondrial.